Consider the following 182-residue polypeptide: Early nodulin-like protein 10 (182 aa).

An N-terminal signal peptide occupies residues 1–20; sequence MSSVMMCCCLLLLFGLLSEG. The 105-residue stretch at 21–125 folds into the Phytocyanin domain; it reads REILVGGKSN…GEKLRVVVLS (105 aa). Asn-65 carries N-linked (GlcNAc...) asparagine glycosylation. Residues Cys-79 and Cys-113 are joined by a disulfide bond. Asn-129 and Asn-148 each carry an N-linked (GlcNAc...) asparagine glycan. Residue Asn-157 is the site of GPI-anchor amidated asparagine attachment. Positions 158–182 are cleaved as a propeptide — removed in mature form; sequence AHIMNKGSLNTAWSLLLLLPLGLLV.

The protein belongs to the early nodulin-like (ENODL) family. As to expression, mostly expressed in flowers, and, to a lower extent, in leaves, but barely in seedlings, stems, seeds and roots.

The protein resides in the cell membrane. In terms of biological role, may act as a carbohydrate transporter. The chain is Early nodulin-like protein 10 from Arabidopsis thaliana (Mouse-ear cress).